Reading from the N-terminus, the 279-residue chain is 4-hydroxy-3-methylbut-2-enyl diphosphate reductase (279 aa).

Residue Cys12 participates in [4Fe-4S] cluster binding. Residues His40 and His72 each coordinate (2E)-4-hydroxy-3-methylbut-2-enyl diphosphate. Residues His40 and His72 each contribute to the dimethylallyl diphosphate site. Isopentenyl diphosphate-binding residues include His40 and His72. Cys94 is a binding site for [4Fe-4S] cluster. (2E)-4-hydroxy-3-methylbut-2-enyl diphosphate is bound at residue His122. His122 lines the dimethylallyl diphosphate pocket. His122 contacts isopentenyl diphosphate. Glu124 acts as the Proton donor in catalysis. A (2E)-4-hydroxy-3-methylbut-2-enyl diphosphate-binding site is contributed by Thr161. Residue Cys189 participates in [4Fe-4S] cluster binding. (2E)-4-hydroxy-3-methylbut-2-enyl diphosphate is bound by residues Ser217, Asn219, and Ser261. Dimethylallyl diphosphate is bound by residues Ser217, Asn219, and Ser261. Isopentenyl diphosphate-binding residues include Ser217, Asn219, and Ser261.

This sequence belongs to the IspH family. [4Fe-4S] cluster serves as cofactor.

The enzyme catalyses isopentenyl diphosphate + 2 oxidized [2Fe-2S]-[ferredoxin] + H2O = (2E)-4-hydroxy-3-methylbut-2-enyl diphosphate + 2 reduced [2Fe-2S]-[ferredoxin] + 2 H(+). It carries out the reaction dimethylallyl diphosphate + 2 oxidized [2Fe-2S]-[ferredoxin] + H2O = (2E)-4-hydroxy-3-methylbut-2-enyl diphosphate + 2 reduced [2Fe-2S]-[ferredoxin] + 2 H(+). It participates in isoprenoid biosynthesis; dimethylallyl diphosphate biosynthesis; dimethylallyl diphosphate from (2E)-4-hydroxy-3-methylbutenyl diphosphate: step 1/1. Its pathway is isoprenoid biosynthesis; isopentenyl diphosphate biosynthesis via DXP pathway; isopentenyl diphosphate from 1-deoxy-D-xylulose 5-phosphate: step 6/6. Functionally, catalyzes the conversion of 1-hydroxy-2-methyl-2-(E)-butenyl 4-diphosphate (HMBPP) into a mixture of isopentenyl diphosphate (IPP) and dimethylallyl diphosphate (DMAPP). Acts in the terminal step of the DOXP/MEP pathway for isoprenoid precursor biosynthesis. The sequence is that of 4-hydroxy-3-methylbut-2-enyl diphosphate reductase from Syntrophotalea carbinolica (strain DSM 2380 / NBRC 103641 / GraBd1) (Pelobacter carbinolicus).